A 286-amino-acid chain; its full sequence is Ribosomal RNA small subunit methyltransferase H (286 aa).

S-adenosyl-L-methionine contacts are provided by residues 25–27 (GGH), Asp45, Leu79, Asp93, and Gln100.

This sequence belongs to the methyltransferase superfamily. RsmH family.

It is found in the cytoplasm. It catalyses the reaction cytidine(1402) in 16S rRNA + S-adenosyl-L-methionine = N(4)-methylcytidine(1402) in 16S rRNA + S-adenosyl-L-homocysteine + H(+). Functionally, specifically methylates the N4 position of cytidine in position 1402 (C1402) of 16S rRNA. The sequence is that of Ribosomal RNA small subunit methyltransferase H from Petrotoga mobilis (strain DSM 10674 / SJ95).